The sequence spans 438 residues: Protein phosphatase 2C homolog 2 (438 aa).

Positions 23–294 (IYGVSAMQGW…DNMTMVIIGF (272 aa)) constitute a PPM-type phosphatase domain. Mn(2+) is bound by residues Asp-67, Gly-68, Asp-236, and Asp-285. The interval 370-438 (VLTGSDDTEM…EKTPEESKKD (69 aa)) is disordered. Residues 375 to 387 (DDTEMFDNADEDK) show a composition bias toward acidic residues. Positions 398–438 (GKTDAKEETEAKPAPEAESSKPADGSEKKQDEKTPEESKKD) are enriched in basic and acidic residues.

Belongs to the PP2C family. Mg(2+) is required as a cofactor. Mn(2+) serves as cofactor.

The protein resides in the cytoplasm. It localises to the nucleus. It carries out the reaction O-phospho-L-seryl-[protein] + H2O = L-seryl-[protein] + phosphate. The catalysed reaction is O-phospho-L-threonyl-[protein] + H2O = L-threonyl-[protein] + phosphate. In terms of biological role, dephosphorylating regulator for many key proteins. Negatively regulates the endoplasmic reticulum unfolded protein response. The chain is Protein phosphatase 2C homolog 2 from Hypocrea jecorina (strain QM6a) (Trichoderma reesei).